The chain runs to 208 residues: Small ribosomal subunit protein uS4 (208 aa).

One can recognise an S4 RNA-binding domain in the interval 98–160 (QRLDNVVYRM…SKNNSQIVRA (63 aa)).

Belongs to the universal ribosomal protein uS4 family. As to quaternary structure, part of the 30S ribosomal subunit. Contacts protein S5. The interaction surface between S4 and S5 is involved in control of translational fidelity.

In terms of biological role, one of the primary rRNA binding proteins, it binds directly to 16S rRNA where it nucleates assembly of the body of the 30S subunit. Its function is as follows. With S5 and S12 plays an important role in translational accuracy. In Sulfurimonas denitrificans (strain ATCC 33889 / DSM 1251) (Thiomicrospira denitrificans (strain ATCC 33889 / DSM 1251)), this protein is Small ribosomal subunit protein uS4.